The following is a 408-amino-acid chain: MQQTTFEESRYHWQDSLENVAVCLPFRCPRCGDHTRFRSLSSLRAHLEFSHSYEERTLLTKCSLLPSLKDTELLRSSELPKQGKVLRGHAKVTKQKSSYVNLYSISHGHSKDTKPFEMVAERPVSYVQTYTAVDIRADSLDAPCASPGLPTQDTKAAFEAHVREKFNRMVEAVDRTIEKRIDKLTKELAQKTAELLEVRAAFAQLTQKKQEVQRRERALNKQVDVAVEMIAVLKQRLTESEEELLRKEEEVVTFNHFLEAAAEKEVQGKARLQDFIENLLQRVELAEKQLEYYQSQQASGFSCDTSEHMLTDIPSNRKPRCLSRGHQHSVCNHPEMRAHFHLKGRSYLKKAKDERAGMQPAKAIHEPAESPREFFRPAKKGEHLGLSRKGNFRPKMAKKKPTAIVNII.

Residue serine 16 is modified to Phosphoserine. The C2H2-type; degenerate zinc finger occupies 26-51; sequence FRCPRCGDHTRFRSLSSLRAHLEFSH. Phosphoserine is present on residues serine 139 and serine 146. Residues 170–298 are a coiled coil; it reads VEAVDRTIEK…QLEYYQSQQA (129 aa). A Phosphothreonine modification is found at threonine 176. The residue at position 370 (serine 370) is a Phosphoserine.

As to quaternary structure, homodimer. Interacts with NDE1 and NDEL1. Interacts with DISC1. Interacts with PARP1. Interacts with MCRS1. In terms of tissue distribution, detected in several tissues, with highest levels in brain. Also expressed during embryonic development. Expressed in cerebral cortex, hippocampus, striatum, inferior colliculus and thalamus.

It localises to the cytoplasm. The protein resides in the cytoskeleton. The protein localises to the microtubule organizing center. It is found in the centrosome. Functionally, contributes to genomic stability by preventing telomere dysfunction. Involved in the morphogenesis of basket cells in the somatosensory cortex during embryogenesis. Involved in the positive regulation of oligodendrocyte differentiation during postnatal growth. Involved in dendritic arborization, morphogenesis of spine density dendrite, and establishment of postsynaptic dendrite density in cortical pyramidal neurons. Involved in the regulation of neurogenesis. Negatively regulates neurite outgrowth. Involved in homologous recombination (HR) repair pathway. Required for proper resolution of DNA double-strand breaks (DSBs) by HR. Is required for recovery of stalled replication forks, and directly contributes to genomic stability. Interacts with PARP1 and mediates MRE11-dependent DNA end resection during replication fork recovery. This is Protein ZNF365 (Znf365) from Mus musculus (Mouse).